The sequence spans 205 residues: NADH-quinone oxidoreductase subunit C (205 aa).

The protein belongs to the complex I 30 kDa subunit family. As to quaternary structure, NDH-1 is composed of 14 different subunits. Subunits NuoB, C, D, E, F, and G constitute the peripheral sector of the complex.

It localises to the cell inner membrane. The catalysed reaction is a quinone + NADH + 5 H(+)(in) = a quinol + NAD(+) + 4 H(+)(out). Functionally, NDH-1 shuttles electrons from NADH, via FMN and iron-sulfur (Fe-S) centers, to quinones in the respiratory chain. The immediate electron acceptor for the enzyme in this species is believed to be ubiquinone. Couples the redox reaction to proton translocation (for every two electrons transferred, four hydrogen ions are translocated across the cytoplasmic membrane), and thus conserves the redox energy in a proton gradient. This chain is NADH-quinone oxidoreductase subunit C, found in Bartonella bacilliformis (strain ATCC 35685 / KC583 / Herrer 020/F12,63).